A 295-amino-acid chain; its full sequence is ATP synthase gamma chain (295 aa).

It belongs to the ATPase gamma chain family. In terms of assembly, F-type ATPases have 2 components, CF(1) - the catalytic core - and CF(0) - the membrane proton channel. CF(1) has five subunits: alpha(3), beta(3), gamma(1), delta(1), epsilon(1). CF(0) has three main subunits: a, b and c.

Its subcellular location is the cell inner membrane. Produces ATP from ADP in the presence of a proton gradient across the membrane. The gamma chain is believed to be important in regulating ATPase activity and the flow of protons through the CF(0) complex. The sequence is that of ATP synthase gamma chain from Campylobacter concisus (strain 13826).